Consider the following 48-residue polypeptide: U-actitoxin-Cgg3 (48 aa).

Intrachain disulfides connect cysteine 5-cysteine 41, cysteine 7-cysteine 33, and cysteine 23-cysteine 42. At serine 46 the chain carries Serine amide. Residues 47-48 (GR) constitute a propeptide, removed in mature form.

This sequence belongs to the sea anemone type 3 (BDS) potassium channel toxin family.

The protein resides in the secreted. In terms of biological role, neurotoxin that induces paralysis when injected into crabs. May function in antimicrobial activity as it displays inhibitory activity towards the B.licheniformis enzyme subtilisin A (SUBTA) and the recombinant S.maltophilia protease 1 (rStmPr1) enzyme. Also displays inhibitory activity against various proteases including the porcine pancreatic elastase (PPE) and proteinase K (PK). This chain is U-actitoxin-Cgg3, found in Condylactis gigantea (Giant Caribbean anemone).